The chain runs to 184 residues: Oligoribonuclease (184 aa).

In terms of domain architecture, Exonuclease spans 7–170 (LIWIDLEMTG…DDIYESIEEL (164 aa)). Tyr128 is an active-site residue.

Belongs to the oligoribonuclease family.

The protein resides in the cytoplasm. In terms of biological role, 3'-to-5' exoribonuclease specific for small oligoribonucleotides. The polypeptide is Oligoribonuclease (Hydrogenovibrio crunogenus (strain DSM 25203 / XCL-2) (Thiomicrospira crunogena)).